A 575-amino-acid polypeptide reads, in one-letter code: Golgi-associated kinase 1A (575 aa).

Residues 1-29 (MASWLRRKLRGKRRPVIAFCLLMILSAMA) form the signal peptide. Positions 30-119 (VTRFPPQRPS…GDLRHPGRVR (90 aa)) are cleaved as a propeptide — removed in mature form. The segment at 53-58 (TGAPAT) is O-glycosylated at one site. The span at 143–153 (VGDPGTKDLGH) shows a compositional bias: basic and acidic residues. Residues 143 to 162 (VGDPGTKDLGHPQHGSPIQE) are disordered. Residues 437–575 (RYCCGFEPEP…NLTLFRDEDP (139 aa)) constitute a propeptide, removed in mature form. An N-linked (GlcNAc...) asparagine glycan is attached at Asn566.

This sequence belongs to the GASK family. Post-translationally, O-glycosylated with core 1 or possibly core 8 glycans. In terms of processing, proteolytically cleaved. Cleaved at Arg-120 and Arg-437 leading to a processed mature product of 35 kDa. The cleavage takes place in the Golgi apparatus. In terms of tissue distribution, expressed in skin, lung and colon (at protein level).

The protein resides in the secreted. The protein localises to the endoplasmic reticulum. It is found in the golgi apparatus. Its subcellular location is the membrane. It localises to the caveola. This chain is Golgi-associated kinase 1A, found in Homo sapiens (Human).